Consider the following 348-residue polypeptide: Sec-independent protein translocase protein TatC (348 aa).

6 helical membrane-spanning segments follow: residues 7–27, 162–182, 192–212, 244–264, 278–298, and 299–319; these read LCLTVSTILCAGFASNLMDIL, VVISFPLLLYFLLQFIIPGLL, CMAVGFGLFLAGTLFCYFIVL, MILMFGLAFELPVVVMPFVKL, YAIVAIAVLAAVITPTPDVAT, and MMLMAVPMYALYEICIILAWM.

Belongs to the TatC family. As to quaternary structure, forms a complex with TatA.

It localises to the cell membrane. Part of the twin-arginine translocation (Tat) system that transports large folded proteins containing a characteristic twin-arginine motif in their signal peptide across membranes. In Akkermansia muciniphila (strain ATCC BAA-835 / DSM 22959 / JCM 33894 / BCRC 81048 / CCUG 64013 / CIP 107961 / Muc), this protein is Sec-independent protein translocase protein TatC.